We begin with the raw amino-acid sequence, 286 residues long: 2-hydroxy-6-oxo-6-phenylhexa-2,4-dienoate hydrolase (286 aa).

Substrate contacts are provided by residues 42–43 (GG), Asn51, Asn111, Thr180, and Arg190. His265 serves as the catalytic Proton acceptor. Trp266 serves as a coordination point for substrate.

Belongs to the AB hydrolase superfamily. BphD family. In terms of assembly, homodimer.

It carries out the reaction 2,6-dioxo-6-phenylhexa-3-enoate + H2O = 2-oxopent-4-enoate + benzoate + H(+). It functions in the pathway xenobiotic degradation; biphenyl degradation; 2-hydroxy-2,4-pentadienoate and benzoate from biphenyl: step 4/4. Functionally, catalyzes an unusual C-C bond hydrolysis of 2-hydroxy-6-oxo-6-phenylhexa-2,4-dienoic acid (HOPDA) to produce benzoic acid and 2-hydroxy-2,4-pentadienoic acid (HPD). This chain is 2-hydroxy-6-oxo-6-phenylhexa-2,4-dienoate hydrolase, found in Comamonas testosteroni (Pseudomonas testosteroni).